We begin with the raw amino-acid sequence, 392 residues long: Metacaspase-1 (392 aa).

Polar residues predominate over residues M1–P14. The tract at residues M1–Q87 is disordered. The segment covering Q41–G51 has biased composition (low complexity). A compositionally biased stretch (polar residues) spans N53 to D63. Residues H182 and C238 contribute to the active site.

Belongs to the peptidase C14B family.

In terms of biological role, involved in cell death (apoptosis). In Candida glabrata (strain ATCC 2001 / BCRC 20586 / JCM 3761 / NBRC 0622 / NRRL Y-65 / CBS 138) (Yeast), this protein is Metacaspase-1 (MCA1).